We begin with the raw amino-acid sequence, 257 residues long: Snake venom serine protease Haly-2 (257 aa).

The signal sequence occupies residues 1–18; it reads MVLIRVLANLLILQLSYA. A propeptide spanning residues 19 to 24 is cleaved from the precursor; that stretch reads QKSSEL. A Peptidase S1 domain is found at 25-248; that stretch reads IIGGDECNIN…HLEWIRSIIA (224 aa). 6 disulfides stabilise this stretch: cysteine 31/cysteine 162, cysteine 49/cysteine 65, cysteine 97/cysteine 255, cysteine 141/cysteine 209, cysteine 173/cysteine 188, and cysteine 199/cysteine 224. Residue histidine 64 is the Charge relay system of the active site. N-linked (GlcNAc...) asparagine glycosylation is present at asparagine 100. Aspartate 109 acts as the Charge relay system in catalysis. Serine 203 (charge relay system) is an active-site residue.

The protein belongs to the peptidase S1 family. Snake venom subfamily. As to quaternary structure, monomer. Expressed by the venom gland.

It is found in the secreted. Snake venom serine protease that may act in the hemostasis system of the prey. This Gloydius brevicauda (Korean slamosa snake) protein is Snake venom serine protease Haly-2.